We begin with the raw amino-acid sequence, 336 residues long: Phospholipase A1 (336 aa).

An N-terminal signal peptide occupies residues 1 to 27 (MEENMNLKYLLLFVYFVQVLNCCYGHG). A propeptide spanning residues 28–36 (DPLSYELDR) is cleaved from the precursor. The cysteines at positions 40 and 123 are disulfide-linked. The Nucleophile role is filled by S173. Catalysis depends on D201, which acts as the Charge relay system. Intrachain disulfides connect C212–C217 and C255–C263. H265 serves as the catalytic Charge relay system. Cystine bridges form between C280/C304, C281/C329, and C297/C302.

Belongs to the AB hydrolase superfamily. Lipase family. In terms of tissue distribution, expressed by the venom gland.

It is found in the secreted. The catalysed reaction is a 1,2-diacyl-sn-glycero-3-phosphocholine + H2O = a 2-acyl-sn-glycero-3-phosphocholine + a fatty acid + H(+). Its function is as follows. Catalyzes the hydrolysis of phosphatidylcholine with phospholipase A1 activity. Induces hemolytic activity. Acts as an allergen. In Vespula vulgaris (Yellow jacket), this protein is Phospholipase A1.